Reading from the N-terminus, the 770-residue chain is Arf-GAP with coiled-coil, ANK repeat and PH domain-containing protein 2 (770 aa).

The region spanning 1–226 is the BAR domain; it reads MKMTVDFEEC…MKDLGAQLDR (226 aa). The PH domain occupies 266-361; that stretch reads GIVMEGYLFK…WIKAVQTSIA (96 aa). A disordered region spans residues 371 to 391; the sequence is SEKLDKKSSPSTGSLDSGNES. Residues 379 to 388 are compositionally biased toward polar residues; that stretch reads SPSTGSLDSG. S384 and S387 each carry phosphoserine. One can recognise an Arf-GAP domain in the interval 399 to 520; sequence ESALQRVQCI…KFVDKYSALL (122 aa). The C4-type zinc-finger motif lies at 414–437; sequence CCDCGLADPRWASINLGITLCIEC. S521 carries the phosphoserine modification. The interval 542–572 is disordered; the sequence is ARASVHTPVKSNDSGIQQCSEDGRESLPSTV. Over residues 550–561 the composition is skewed to polar residues; the sequence is VKSNDSGIQQCS. S573 and S576 each carry phosphoserine. ANK repeat units follow at residues 632–661, 665–694, and 698–727; these read NQATPLIQAVLGGSLVTCEFLLQNGANVNQ, QGRGPLHHATVLGHTGQVCLFLKRGANQHA, and EGKDPLSIAVEAANADIVTLLRLARMNEEM. Y734 carries the post-translational modification Phosphotyrosine. A Phosphoserine modification is found at S767.

As to quaternary structure, interacts with RAB35 (GTP-bound form); the interaction is direct and probably recruits ACAP2 to membranes. Interacts with MICALL1; the interaction is indirect through RAB35.

The protein resides in the endosome membrane. Its subcellular location is the cell membrane. With respect to regulation, GAP activity stimulated by phosphatidylinositol 4,5-bisphosphate (PIP2) and phosphatidic acid. In terms of biological role, GTPase-activating protein (GAP) for ADP ribosylation factor 6 (ARF6). Doesn't show GAP activity for RAB35. The polypeptide is Arf-GAP with coiled-coil, ANK repeat and PH domain-containing protein 2 (Acap2) (Mus musculus (Mouse)).